Here is a 339-residue protein sequence, read N- to C-terminus: UDP-glucose 4-epimerase (339 aa).

Residues 12-13, 32-37, 59-60, 81-85, asparagine 100, serine 125, tyrosine 150, lysine 154, and phenylalanine 179 contribute to the NAD(+) site; these read FI, DNLCNS, DI, and FAGLK. Serine 125 and tyrosine 150 together coordinate substrate. Catalysis depends on tyrosine 150, which acts as the Proton acceptor. Residues asparagine 180, 200 to 201, 217 to 219, arginine 232, and 293 to 296 contribute to the substrate site; these read NL, SVF, and RAGD.

This sequence belongs to the NAD(P)-dependent epimerase/dehydratase family. Homodimer. Requires NAD(+) as cofactor.

It catalyses the reaction UDP-alpha-D-glucose = UDP-alpha-D-galactose. Its pathway is carbohydrate metabolism; galactose metabolism. Its function is as follows. Involved in the metabolism of galactose. Plays an essential role in the incorporation of galactose into meningococcal lipopolysaccharide surface molecules, which are important for pathogenesis. Catalyzes the conversion of UDP-galactose (UDP-Gal) to UDP-glucose (UDP-Glc) through a mechanism involving the transient reduction of NAD. This Neisseria meningitidis serogroup A / serotype 4A (strain DSM 15465 / Z2491) protein is UDP-glucose 4-epimerase (galE).